The primary structure comprises 439 residues: MNLLPTPESPVTRQEKMATVWDEAEQDGIGEEVLKMSTEEIVQRTRLLDSEIKIMKSEVLRVTHELQAMKDKIKENSEKIKVNKTLPYLVSNVIELLDVDPNDQEEDGANIDLDSQRKGKCAVIKTSTRQTYFLPVIGLVDAEKLKPGDLVGVNKDSYLILETLPTEYDSRVKAMEVDERPTEQYSDIGGLDKQIQELVEAIVLPMNHKEKFENLGIQPPKGVLMYGPPGTGKTLLARACAAQTKATFLKLAGPQLVQMFIGDGAKLVRDAFALAKEKAPSIIFIDELDAIGTKRFDSEKAGDREVQRTMLELLNQLDGFQPNTQVKVIAATNRVDILDPALLRSGRLDRKIEFPMPNEEARARIMQIHSRKMNVSPDVNYEELARCTDDFNGAQCKAVCVEAGMIALRRGATELTHEDYMEGILEVQAKKKANLQYYA.

Methionine 1 carries the post-translational modification N-acetylmethionine. At serine 9 the chain carries Phosphoserine. 227 to 234 lines the ATP pocket; the sequence is GPPGTGKT. The residue at position 376 (serine 376) is a Phosphoserine.

The protein belongs to the AAA ATPase family. Component of the 19S proteasome regulatory particle complex. The 26S proteasome consists of a 20S core particle (CP) and two 19S regulatory subunits (RP). The regulatory particle is made of a lid composed of 9 subunits, a base containing 6 ATPases including PSMC3 and few additional components. Interacts with PAAF1.

Its subcellular location is the cytoplasm. It is found in the nucleus. Component of the 26S proteasome, a multiprotein complex involved in the ATP-dependent degradation of ubiquitinated proteins. This complex plays a key role in the maintenance of protein homeostasis by removing misfolded or damaged proteins, which could impair cellular functions, and by removing proteins whose functions are no longer required. Therefore, the proteasome participates in numerous cellular processes, including cell cycle progression, apoptosis, or DNA damage repair. PSMC3 belongs to the heterohexameric ring of AAA (ATPases associated with diverse cellular activities) proteins that unfolds ubiquitinated target proteins that are concurrently translocated into a proteolytic chamber and degraded into peptides. The sequence is that of 26S proteasome regulatory subunit 6A (Psmc3) from Rattus norvegicus (Rat).